A 230-amino-acid chain; its full sequence is MSVRILVVDDDRAVRESLRRSLSFNGYSVELAHDGVEALDMIASDRPDALVLDVMMPRLDGLEVCRQLRSTGDDLPILVLTARDSVSERVAGLDAGADDYLPKPFALEELLARMRALLRRTKPEDAAESMAMRFSDLTLDPVTREVNRGQRRISLTRTEFALLEMLIANPRRVLTRSRILEEVWGFDFPTSGNALEVYVGYLRRKTEADGEPRLIHTVRGVGYVLRETPP.

Residues 4 to 118 (RILVVDDDRA…ELLARMRALL (115 aa)) enclose the Response regulatory domain. D48 carries the 4-aspartylphosphate modification. The ompR/PhoB-type DNA-binding region spans 129–227 (SMAMRFSDLT…VRGVGYVLRE (99 aa)).

In terms of assembly, monomer. Interaction with each conserved 8-bp repeat requires tandem binding by two protein monomers. In terms of processing, phosphorylated and dephosphorylated by MprB.

The protein localises to the cytoplasm. Its function is as follows. Member of the two-component regulatory system MprB/MprA which contributes to maintaining a balance among several systems involved in stress resistance and is required for establishment and maintenance of persistent infection in the host. Functions as a transcriptional regulator that recognizes a 19-bp nucleotide motif comprizing two loosely conserved 8-bp direct DNA-binding motif repeats separated by a 3-bp spacer region. MprB/MprA up-regulates expression of mprA and pepD. This chain is Response regulator MprA (mprA), found in Mycobacterium bovis (strain ATCC BAA-935 / AF2122/97).